Reading from the N-terminus, the 420-residue chain is UDP-N-acetylglucosamine 1-carboxyvinyltransferase (420 aa).

22–23 contributes to the phosphoenolpyruvate binding site; sequence KN. R94 provides a ligand contact to UDP-N-acetyl-alpha-D-glucosamine. C118 functions as the Proton donor in the catalytic mechanism. At C118 the chain carries 2-(S-cysteinyl)pyruvic acid O-phosphothioketal. Residues D306 and I328 each coordinate UDP-N-acetyl-alpha-D-glucosamine.

It belongs to the EPSP synthase family. MurA subfamily.

The protein localises to the cytoplasm. The enzyme catalyses phosphoenolpyruvate + UDP-N-acetyl-alpha-D-glucosamine = UDP-N-acetyl-3-O-(1-carboxyvinyl)-alpha-D-glucosamine + phosphate. It functions in the pathway cell wall biogenesis; peptidoglycan biosynthesis. Cell wall formation. Adds enolpyruvyl to UDP-N-acetylglucosamine. This Jannaschia sp. (strain CCS1) protein is UDP-N-acetylglucosamine 1-carboxyvinyltransferase.